Consider the following 681-residue polypeptide: Calpain-C (681 aa).

In terms of domain architecture, Calpain catalytic spans 18-331 (LWEDPDFPAV…FSTMEVVYLD (314 aa)). The interval 332-481 (TETSNDEEML…ILGTGSFRLS (150 aa)) is domain III. The tract at residues 482-514 (CLETQTMILLDPFPALKSTDAERCGGPKVKSVC) is linker. Residues 515 to 681 (QYEPVYMQLA…HDWIKSILSC (167 aa)) are domain IV. Residues 552 to 587 (ANIDICRQVIALQDRSGSGRITFQQFKTFMVNLKSW) form the EF-hand domain. Positions 565, 567, 569, and 571 each coordinate Ca(2+).

Belongs to the peptidase C2 family. In terms of tissue distribution, localized to the salivary glands in the larva.

It localises to the cytoplasm. Its function is as follows. Not known; does not seem to have protease activity. This Drosophila melanogaster (Fruit fly) protein is Calpain-C.